Reading from the N-terminus, the 96-residue chain is Large ribosomal subunit protein bL21 (96 aa).

The protein belongs to the bacterial ribosomal protein bL21 family. In terms of assembly, part of the 50S ribosomal subunit. Contacts protein L20.

In terms of biological role, this protein binds to 23S rRNA in the presence of protein L20. The sequence is that of Large ribosomal subunit protein bL21 from Prosthecochloris aestuarii (strain DSM 271 / SK 413).